Here is a 427-residue protein sequence, read N- to C-terminus: ATP-dependent RNA helicase DDX39A (427 aa).

The segment covering 1–19 (MAEQDVENDLLDYDEEEEP) has biased composition (acidic residues). Positions 1–34 (MAEQDVENDLLDYDEEEEPQAPQESTPAPPKKDI) are disordered. Residue Ala2 is modified to N-acetylalanine. Lys31 is covalently cross-linked (Glycyl lysine isopeptide (Lys-Gly) (interchain with G-Cter in SUMO2)). An N6-acetyllysine; alternate modification is found at Lys35. Lys35 participates in a covalent cross-link: Glycyl lysine isopeptide (Lys-Gly) (interchain with G-Cter in SUMO2); alternate. Phosphoserine is present on Ser37. Positions 44–72 (SGFRDFLLKPELLRAIVDCGFEHPSEVQH) match the Q motif motif. The Helicase ATP-binding domain maps to 75–248 (IPQAILGMDV…RKFMQDPMEV (174 aa)). 88–95 (AKSGMGKT) contributes to the ATP binding site. Glycyl lysine isopeptide (Lys-Gly) (interchain with G-Cter in SUMO2) cross-links involve residues Lys154 and Lys162. Position 171 is a phosphothreonine (Thr171). Residues 195–198 (DECD) carry the DECD box motif. Glycyl lysine isopeptide (Lys-Gly) (interchain with G-Cter in SUMO2) cross-links involve residues Lys240 and Lys255. The 162-residue stretch at 260 to 421 (GLQQYYVKLK…ELPEEIDIST (162 aa)) folds into the Helicase C-terminal domain. Ser426 carries the post-translational modification Phosphoserine.

The protein belongs to the DEAD box helicase family. DECD subfamily. Binds ALYREF/THOC4 and DDX39B/BAT1. Interacts with the apo-AREX complex component SARNP. Interacts with MX1. Interacts with MCM3AP isoform GANP. Interacts with ECD. Interacts with PHAX; this interaction stimulates PHAX RNA binding activity. In terms of assembly, (Microbial infection) Interacts with human cytomegalovirus/HHV-5 protein UL69. In terms of processing, SUMOylated by RANBP2; SUMOylation modification affects its ability to bind RNA. In terms of tissue distribution, detected in testis, and at lower levels in brain, kidney, lung, thymus, spleen and salivary gland.

It localises to the nucleus. Its subcellular location is the cytoplasm. It carries out the reaction ATP + H2O = ADP + phosphate + H(+). In terms of biological role, helicase that plays an essential role in mRNA export and is involved in multiple steps in RNA metabolism including alternative splicing. Regulates nuclear mRNA export to the cytoplasm through association with ECD. Also involved in spliceosomal uridine-rich small nuclear RNA (U snRNA) export by stimulating the RNA binding of adapter PHAX. Plays a role in the negative regulation of type I IFN production by increasing the nuclear retention of antiviral transcripts and thus reducing their protein expression. Independently of the interferon pathway, plays an antiviral role against alphaviruses by binding to a 5' conserved sequence element in the viral genomic RNA. This is ATP-dependent RNA helicase DDX39A (DDX39A) from Homo sapiens (Human).